Here is a 379-residue protein sequence, read N- to C-terminus: Glutamate 5-kinase (379 aa).

Lys15 contributes to the ATP binding site. Residues Ser56, Asp143, and Asn155 each contribute to the substrate site. 175–176 (SD) lines the ATP pocket. The region spanning 281-358 (RGTLAIDAGA…SDAAQLLGVR (78 aa)) is the PUA domain.

Belongs to the glutamate 5-kinase family.

Its subcellular location is the cytoplasm. It carries out the reaction L-glutamate + ATP = L-glutamyl 5-phosphate + ADP. It functions in the pathway amino-acid biosynthesis; L-proline biosynthesis; L-glutamate 5-semialdehyde from L-glutamate: step 1/2. In terms of biological role, catalyzes the transfer of a phosphate group to glutamate to form L-glutamate 5-phosphate. The chain is Glutamate 5-kinase from Nitrobacter winogradskyi (strain ATCC 25391 / DSM 10237 / CIP 104748 / NCIMB 11846 / Nb-255).